A 380-amino-acid polypeptide reads, in one-letter code: Putative 8-amino-7-oxononanoate synthase (380 aa).

Arginine 18 contributes to the substrate binding site. 106–107 lines the pyridoxal 5'-phosphate pocket; it reads GY. Histidine 131 contributes to the substrate binding site. Pyridoxal 5'-phosphate is bound by residues serine 179, 205–208, and 236–239; these read DEAH and TFGK. Lysine 239 is subject to N6-(pyridoxal phosphate)lysine. Position 352 (threonine 352) interacts with substrate.

This sequence belongs to the class-II pyridoxal-phosphate-dependent aminotransferase family. BioF subfamily. As to quaternary structure, homodimer. Pyridoxal 5'-phosphate is required as a cofactor.

The enzyme catalyses 6-carboxyhexanoyl-[ACP] + L-alanine + H(+) = (8S)-8-amino-7-oxononanoate + holo-[ACP] + CO2. It participates in cofactor biosynthesis; biotin biosynthesis. Its function is as follows. Catalyzes the decarboxylative condensation of pimeloyl-[acyl-carrier protein] and L-alanine to produce 8-amino-7-oxononanoate (AON), [acyl-carrier protein], and carbon dioxide. The polypeptide is Putative 8-amino-7-oxononanoate synthase (bioF) (Neisseria meningitidis serogroup C (strain 053442)).